A 685-amino-acid chain; its full sequence is Probable transketolase (685 aa).

Histidine 32 contacts substrate. Residues histidine 72 and 121-123 (GPL) each bind thiamine diphosphate. Aspartate 162 contributes to the Mg(2+) binding site. Residues glycine 163 and asparagine 192 each coordinate thiamine diphosphate. Mg(2+) is bound by residues asparagine 192 and isoleucine 194. Histidine 268, arginine 363, and serine 390 together coordinate substrate. A thiamine diphosphate-binding site is contributed by histidine 268. Residues glutamate 422 and phenylalanine 448 each coordinate thiamine diphosphate. Glutamate 422 (proton donor) is an active-site residue. Residues histidine 472, aspartate 480, and arginine 531 each coordinate substrate.

It belongs to the transketolase family. In terms of assembly, homodimer. Mg(2+) serves as cofactor. Requires Ca(2+) as cofactor. The cofactor is Mn(2+). It depends on Co(2+) as a cofactor. Thiamine diphosphate is required as a cofactor.

It catalyses the reaction D-sedoheptulose 7-phosphate + D-glyceraldehyde 3-phosphate = aldehydo-D-ribose 5-phosphate + D-xylulose 5-phosphate. Functionally, catalyzes the transfer of a two-carbon ketol group from a ketose donor to an aldose acceptor, via a covalent intermediate with the cofactor thiamine pyrophosphate. This is Probable transketolase from Schizosaccharomyces pombe (strain 972 / ATCC 24843) (Fission yeast).